Here is a 372-residue protein sequence, read N- to C-terminus: NAD(P)H-quinone oxidoreductase subunit 1 (372 aa).

8 helical membrane passes run 27-47 (IIWL…GVLV), 97-117 (ILFT…WLIV), 128-148 (VGIG…GLLM), 176-196 (LALS…IDIV), 204-224 (ILSW…ICAL), 266-286 (ILSA…PIPV), 308-328 (SIGI…AILL), and 347-367 (FLLP…LALP).

Belongs to the complex I subunit 1 family. In terms of assembly, NDH-1 is composed of at least 11 different subunits.

Its subcellular location is the cellular thylakoid membrane. The catalysed reaction is a plastoquinone + NADH + (n+1) H(+)(in) = a plastoquinol + NAD(+) + n H(+)(out). It catalyses the reaction a plastoquinone + NADPH + (n+1) H(+)(in) = a plastoquinol + NADP(+) + n H(+)(out). Its function is as follows. NDH-1 shuttles electrons from an unknown electron donor, via FMN and iron-sulfur (Fe-S) centers, to quinones in the respiratory and/or the photosynthetic chain. The immediate electron acceptor for the enzyme in this species is believed to be plastoquinone. Couples the redox reaction to proton translocation, and thus conserves the redox energy in a proton gradient. The protein is NAD(P)H-quinone oxidoreductase subunit 1 of Prochlorococcus marinus (strain MIT 9515).